The primary structure comprises 116 residues: Ly-6/neurotoxin-like protein 1 (116 aa).

The N-terminal stretch at 1 to 20 (MTPLLTLILVVLMGLPLAQA) is a signal peptide. Residues 21–105 (LDCHVCAYNG…LATPATLALA (85 aa)) enclose the UPAR/Ly6 domain. 5 disulfides stabilise this stretch: Cys23–Cys46, Cys26–Cys33, Cys39–Cys64, Cys68–Cys85, and Cys86–Cys91. Asn92 is lipidated: GPI-anchor amidated asparagine. The propeptide at 93-116 (GAGLATPATLALAPILLATLWGLL) is removed in mature form.

As to quaternary structure, interacts with nAChRs containing alpha-4:beta-2 (CHRNA4:CHRNB2) and alpha-7 (CHRNA7) subunits. Interacts with CHRNA4 probably in the endoplasmic reticulum prior to nAChR pentameric assembly. Interacts with KCNA2/Potassium voltage-gated channel subfamily A member 2.

The protein resides in the cell membrane. The protein localises to the cell projection. It is found in the dendrite. It localises to the endoplasmic reticulum. Functionally, acts in different tissues through interaction to nicotinic acetylcholine receptors (nAChRs). The proposed role as modulator of nAChR activity seems to be dependent on the nAChR subtype and stoichiometry, and to involve an effect on nAChR trafficking and its cell surface expression, and on single channel properties of the nAChR inserted in the plasma membrane. Modulates functional properties of nicotinic acetylcholine receptors (nAChRs) to prevent excessive excitation, and hence neurodegeneration. Enhances desensitization by increasing both the rate and extent of desensitization of alpha-4:beta-2-containing nAChRs and slowing recovery from desensitization. Promotes large amplitude ACh-evoked currents through alpha-4:beta-2 nAChRs. Is involved in regulation of the nAChR pentameric assembly in the endoplasmic reticulum. Shifts stoichiometry from high sensitivity alpha-4(2):beta-2(3) to low sensitivity alpha-4(3):beta-2(2) nAChR. In vitro modulates alpha-3:beta-4-containing nAChRs. Reduces cell surface expression of (alpha-3:beta-4)(2):beta-4 and (alpha-3:beta-4)(2):alpha-5 nAChRs suggesting an interaction with nAChR alpha-3(-):(+)beta-4 subunit interfaces and an allosteric mode. Corresponding single channel effects characterized by decreased unitary conductance, altered burst proportions and enhanced desensitization/inactivation seem to depend on nAChR alpha:alpha subunit interfaces and are greater in (alpha-3:beta-2)(2):alpha-3 when compared to (alpha-3:beta-2)(2):alpha-5 nAChRs. Prevents plasticity in the primary visual cortex late in life. This Pan troglodytes (Chimpanzee) protein is Ly-6/neurotoxin-like protein 1.